The following is a 610-amino-acid chain: UvrABC system protein C (610 aa).

One can recognise a GIY-YIG domain in the interval 16 to 94 (SQPGVYRMYD…IKLYQPRYNV (79 aa)). Residues 204–239 (DQVLTQLIARMEKASQDLAFEEAARIRDQIQAVRRV) enclose the UVR domain.

Belongs to the UvrC family. As to quaternary structure, interacts with UvrB in an incision complex.

Its subcellular location is the cytoplasm. Functionally, the UvrABC repair system catalyzes the recognition and processing of DNA lesions. UvrC both incises the 5' and 3' sides of the lesion. The N-terminal half is responsible for the 3' incision and the C-terminal half is responsible for the 5' incision. The chain is UvrABC system protein C from Salmonella typhi.